We begin with the raw amino-acid sequence, 574 residues long: MVDGNYSVASNVMVPMRDGVRLAVDLYRPDADGPVPVLLVRNPYDKFDVFAWSTQSTNWLEFVRDGYAVVIQDTRGLFASEGEFVPHVDDEADAEDTLSWILEQAWCDGNVGMFGVSYLGVTQWQAAVSGVGGLKAIAPSMASADLYRAPWYGPGGALSVEALLGWSALIGTGLITSRSDARPEDAADFVQLAAILNDVAGAASVTPLAEQPLLGRLIPWVIDQVVDHPDNDESWQSISLFERLGGLATPALITAGWYDGFVGESLRTFVAVKDNADARLVVGPWSHSNLTGRNADRKFGIAATYPIQEATTMHKAFFDRHLRGETDALAGVPKVRLFVMGIDEWRDETDWPLPDTAYTPFYLGGSGAANTSTGGGTLSTSISGTESADTYLYDPADPVPSLGGTLLFHNGDNGPADQRPIHDRDDVLCYSTEVLTDPVEVTGTVSARLFVSSSAVDTDFTAKLVDVFPDGRAIALCDGIVRMRYRETLVNPTLIEAGEIYEVAIDMLATSNVFLPGHRIMVQVSSSNFPKYDRNSNTGGVIAREQLEEMCTAVNRIHRGPEHPSHIVLPIIKR.

The interval 1–144 (MVDGNYSVAS…KAIAPSMASA (144 aa)) is 1A. A substrate-binding site is contributed by Y44. S117 acts as the Acyl-ester intermediate in catalysis. Residue Y118 coordinates substrate. Residues 145-240 (DLYRAPWYGP…NDESWQSISL (96 aa)) form a 2 region. Positions 241-354 (FERLGGLATP…WRDETDWPLP (114 aa)) are 1B. Catalysis depends on charge relay system residues D259 and H287. Residues 355–574 (DTAYTPFYLG…SHIVLPIIKR (220 aa)) are 3.

Belongs to the CocE/NonD hydrolase family. In terms of assembly, homodimer. The protein aggregates upon heat inactivation.

It localises to the cytoplasm. The catalysed reaction is cocaine + H2O = ecgonine methyl ester + benzoate + H(+). It participates in alkaloid degradation; cocaine degradation. Its function is as follows. Hydrolyzes cocaine to benzoate and ecgonine methyl ester, endowing the bacteria with the ability to utilize cocaine as a sole source of carbon and energy for growth, as this bacterium lives in the rhizosphere of coca plants. Also efficiently hydrolyzes cocaethylene, a more potent cocaine metabolite that has been observed in patients who concurrently abuse cocaine and alcohol. Is able to prevent cocaine-induced convulsions and lethality in rat. In Rhodococcus sp. (strain MB1 Bresler), this protein is Cocaine esterase (cocE).